Consider the following 131-residue polypeptide: Small ribosomal subunit protein uS8 (131 aa).

Belongs to the universal ribosomal protein uS8 family. Part of the 30S ribosomal subunit. Contacts proteins S5 and S12.

Functionally, one of the primary rRNA binding proteins, it binds directly to 16S rRNA central domain where it helps coordinate assembly of the platform of the 30S subunit. This chain is Small ribosomal subunit protein uS8, found in Burkholderia multivorans (strain ATCC 17616 / 249).